Reading from the N-terminus, the 290-residue chain is ATP synthase gamma chain (290 aa).

This sequence belongs to the ATPase gamma chain family. F-type ATPases have 2 components, CF(1) - the catalytic core - and CF(0) - the membrane proton channel. CF(1) has five subunits: alpha(3), beta(3), gamma(1), delta(1), epsilon(1). CF(0) has three main subunits: a, b and c.

The protein localises to the cell inner membrane. In terms of biological role, produces ATP from ADP in the presence of a proton gradient across the membrane. The gamma chain is believed to be important in regulating ATPase activity and the flow of protons through the CF(0) complex. In Dictyoglomus thermophilum (strain ATCC 35947 / DSM 3960 / H-6-12), this protein is ATP synthase gamma chain.